A 467-amino-acid chain; its full sequence is uncharacterized protein (467 aa).

9 Sel1-like repeats span residues 38 to 73, 107 to 138, 139 to 172, 173 to 208, 240 to 275, 276 to 311, 343 to 378, 379 to 414, and 415 to 450; these read PAAAFELAKHLMDADSPYQDREQGMEMLRIAAEQGH, PEAQVRLMYLLYASRHFEEALEWAKTSAKNNN, PHGQYLLAQYCRYGTPPDFETAHLLYRKSAAQGL, PEAHWQLGLQYRFGQGTKVDTAQAVNHLRAAAQQGY, PDAHAALADIYLQGKHLERNHKLALHHAEAAAAERH, PEGLRILGDICRYGLGIAPDTEKARHYYRQAAEAGS, AERLYQKAQALHYGLQCAPEYAAALKLYTEAAELGH, SKAQTNLGSMYYFGQGMTADYNEARKWFEKAAAKKD, and SMAFYNLACIHYSGHGVEPDKEKACRYLQEAINNGY.

This is an uncharacterized protein from Neisseria meningitidis serogroup B (strain ATCC BAA-335 / MC58).